The following is a 35-amino-acid chain: uncharacterized protein (35 aa).

This is an uncharacterized protein from Haloarcula hispanica (His1V).